Here is a 245-residue protein sequence, read N- to C-terminus: tRNA pseudouridine synthase A (245 aa).

Aspartate 52 functions as the Nucleophile in the catalytic mechanism. Substrate is bound at residue tyrosine 111.

This sequence belongs to the tRNA pseudouridine synthase TruA family. In terms of assembly, homodimer.

The enzyme catalyses uridine(38/39/40) in tRNA = pseudouridine(38/39/40) in tRNA. Its function is as follows. Formation of pseudouridine at positions 38, 39 and 40 in the anticodon stem and loop of transfer RNAs. The sequence is that of tRNA pseudouridine synthase A from Rickettsia rickettsii (strain Iowa).